We begin with the raw amino-acid sequence, 101 residues long: Phosphoribosyl-ATP pyrophosphatase (101 aa).

The protein belongs to the PRA-PH family.

It localises to the cytoplasm. It carries out the reaction 1-(5-phospho-beta-D-ribosyl)-ATP + H2O = 1-(5-phospho-beta-D-ribosyl)-5'-AMP + diphosphate + H(+). It participates in amino-acid biosynthesis; L-histidine biosynthesis; L-histidine from 5-phospho-alpha-D-ribose 1-diphosphate: step 2/9. This is Phosphoribosyl-ATP pyrophosphatase from Natronomonas pharaonis (strain ATCC 35678 / DSM 2160 / CIP 103997 / JCM 8858 / NBRC 14720 / NCIMB 2260 / Gabara) (Halobacterium pharaonis).